The chain runs to 726 residues: Catalase-peroxidase (726 aa).

Residues 91–214 (WHSAGTYRIA…LGAVQMGLIY (124 aa)) constitute a cross-link (tryptophyl-tyrosyl-methioninium (Trp-Tyr) (with M-240)). His92 serves as the catalytic Proton acceptor. Residues 214-240 (YVNPEGPNGNPDPLAAARDIRETFARM) constitute a cross-link (tryptophyl-tyrosyl-methioninium (Tyr-Met) (with W-91)). A heme b-binding site is contributed by His255. The tract at residues 335–362 (AHQWRPKAGAGADSVPDPHDPNKRRTPS) is disordered.

This sequence belongs to the peroxidase family. Peroxidase/catalase subfamily. In terms of assembly, homodimer or homotetramer. The cofactor is heme b. In terms of processing, formation of the three residue Trp-Tyr-Met cross-link is important for the catalase, but not the peroxidase activity of the enzyme.

It carries out the reaction H2O2 + AH2 = A + 2 H2O. The enzyme catalyses 2 H2O2 = O2 + 2 H2O. In terms of biological role, bifunctional enzyme with both catalase and broad-spectrum peroxidase activity. This Pseudomonas fluorescens (strain ATCC BAA-477 / NRRL B-23932 / Pf-5) protein is Catalase-peroxidase.